A 271-amino-acid chain; its full sequence is Formamidopyrimidine-DNA glycosylase (271 aa).

The Schiff-base intermediate with DNA role is filled by Pro2. Catalysis depends on Glu3, which acts as the Proton donor. Lys58 serves as the catalytic Proton donor; for beta-elimination activity. Residues His91 and Arg109 each contribute to the DNA site. An FPG-type zinc finger spans residues 236–270 (FVYGREGLACRVCATPVRRVVIGQRSTFFCPRCQR). Arg260 functions as the Proton donor; for delta-elimination activity in the catalytic mechanism.

Belongs to the FPG family. As to quaternary structure, monomer. It depends on Zn(2+) as a cofactor.

The enzyme catalyses Hydrolysis of DNA containing ring-opened 7-methylguanine residues, releasing 2,6-diamino-4-hydroxy-5-(N-methyl)formamidopyrimidine.. The catalysed reaction is 2'-deoxyribonucleotide-(2'-deoxyribose 5'-phosphate)-2'-deoxyribonucleotide-DNA = a 3'-end 2'-deoxyribonucleotide-(2,3-dehydro-2,3-deoxyribose 5'-phosphate)-DNA + a 5'-end 5'-phospho-2'-deoxyribonucleoside-DNA + H(+). Functionally, involved in base excision repair of DNA damaged by oxidation or by mutagenic agents. Acts as a DNA glycosylase that recognizes and removes damaged bases. Has a preference for oxidized purines, such as 7,8-dihydro-8-oxoguanine (8-oxoG). Has AP (apurinic/apyrimidinic) lyase activity and introduces nicks in the DNA strand. Cleaves the DNA backbone by beta-delta elimination to generate a single-strand break at the site of the removed base with both 3'- and 5'-phosphates. This Aromatoleum aromaticum (strain DSM 19018 / LMG 30748 / EbN1) (Azoarcus sp. (strain EbN1)) protein is Formamidopyrimidine-DNA glycosylase.